The following is a 210-amino-acid chain: MSLVGGFPHHPVVHHDGYPFAAAAAAAASRCHEENPYFHGWLISHPEMSPPDYSMAPSYSPEYANGAAGLDHSHYGGVPGSGAGGLMQRPVKRRGTANRKERRRTISINSAFAELRECIPNVPADTKLSKIKTLRLATSYIAYLMDLLAKDDQNGETEAFKAEIKKTDVKEEKRKKELNELLKSTVCSNDKKTKGRTGWPQHVWALELKQ.

A disordered region spans residues 81 to 101; it reads SGAGGLMQRPVKRRGTANRKE. Over residues 90 to 101 the composition is skewed to basic residues; it reads PVKRRGTANRKE. A bHLH domain is found at 92–144; it reads KRRGTANRKERRRTISINSAFAELRECIPNVPADTKLSKIKTLRLATSYIAYL.

Efficient DNA binding requires dimerization with another bHLH protein. Heart, liver and spleen.

The protein localises to the nucleus. Essential for cardiac morphogenesis and for the development of branchial arches. Binds DNA on E-box consensus sequence 5'-CANNTG-3'. In Xenopus laevis (African clawed frog), this protein is Heart- and neural crest derivatives-expressed protein 2 (hand2).